Consider the following 253-residue polypeptide: Methionine aminopeptidase A (253 aa).

Residue H80 participates in substrate binding. The a divalent metal cation site is built by D98, D109, and H172. H179 contributes to the substrate binding site. A divalent metal cation-binding residues include E205 and E236.

This sequence belongs to the peptidase M24A family. Methionine aminopeptidase type 1 subfamily. Monomer. The cofactor is Co(2+). It depends on Zn(2+) as a cofactor. Mn(2+) serves as cofactor. Fe(2+) is required as a cofactor.

It catalyses the reaction Release of N-terminal amino acids, preferentially methionine, from peptides and arylamides.. Removes the N-terminal methionine from nascent proteins. The N-terminal methionine is often cleaved when the second residue in the primary sequence is small and uncharged (Met-Ala-, Cys, Gly, Pro, Ser, Thr, or Val). Requires deformylation of the N(alpha)-formylated initiator methionine before it can be hydrolyzed. The protein is Methionine aminopeptidase A of Synechocystis sp. (strain ATCC 27184 / PCC 6803 / Kazusa).